Reading from the N-terminus, the 48-residue chain is Cytochrome b559 subunit beta (48 aa).

A helical transmembrane segment spans residues 23-39; the sequence is WLAVHALAIPSVFFLGA. His27 contacts heme.

This sequence belongs to the PsbE/PsbF family. In terms of assembly, heterodimer of an alpha subunit and a beta subunit. PSII is composed of 1 copy each of membrane proteins PsbA, PsbB, PsbC, PsbD, PsbE, PsbF, PsbH, PsbI, PsbJ, PsbK, PsbL, PsbM, PsbT, PsbX, PsbY, Psb30/Ycf12, peripheral proteins PsbO, CyanoQ (PsbQ), PsbU, PsbV and a large number of cofactors. It forms dimeric complexes. Heme b is required as a cofactor.

It is found in the cellular thylakoid membrane. Functionally, this b-type cytochrome is tightly associated with the reaction center of photosystem II (PSII). PSII is a light-driven water:plastoquinone oxidoreductase that uses light energy to abstract electrons from H(2)O, generating O(2) and a proton gradient subsequently used for ATP formation. It consists of a core antenna complex that captures photons, and an electron transfer chain that converts photonic excitation into a charge separation. This chain is Cytochrome b559 subunit beta, found in Prochlorococcus marinus (strain MIT 9515).